The following is a 492-amino-acid chain: N-succinylglutamate 5-semialdehyde dehydrogenase (492 aa).

220 to 225 (GSANTG) is an NAD(+) binding site. Catalysis depends on residues Glu-243 and Cys-277.

Belongs to the aldehyde dehydrogenase family. AstD subfamily.

The enzyme catalyses N-succinyl-L-glutamate 5-semialdehyde + NAD(+) + H2O = N-succinyl-L-glutamate + NADH + 2 H(+). Its pathway is amino-acid degradation; L-arginine degradation via AST pathway; L-glutamate and succinate from L-arginine: step 4/5. In terms of biological role, catalyzes the NAD-dependent reduction of succinylglutamate semialdehyde into succinylglutamate. This chain is N-succinylglutamate 5-semialdehyde dehydrogenase, found in Escherichia coli (strain K12 / MC4100 / BW2952).